Reading from the N-terminus, the 545-residue chain is CTP synthase (545 aa).

The interval 1–266 (MTTRYIFVTG…DDLVTKRFGL (266 aa)) is amidoligase domain. Serine 14 serves as a coordination point for CTP. UTP is bound at residue serine 14. Residues 15-20 (SLGKGI) and aspartate 72 each bind ATP. 2 residues coordinate Mg(2+): aspartate 72 and glutamate 140. Residues 147–149 (DIE), 187–192 (KTKPTQ), and lysine 223 each bind CTP. UTP is bound by residues 187 to 192 (KTKPTQ) and lysine 223. Residue 239–241 (KDV) participates in ATP binding. In terms of domain architecture, Glutamine amidotransferase type-1 spans 291–542 (TIGMVGKYTE…VAAAVAYQKR (252 aa)). Glycine 352 is a binding site for L-glutamine. Catalysis depends on cysteine 379, which acts as the Nucleophile; for glutamine hydrolysis. Residues 380 to 383 (LGMQ), glutamate 403, and arginine 470 each bind L-glutamine. Active-site residues include histidine 515 and glutamate 517.

This sequence belongs to the CTP synthase family. Homotetramer.

It carries out the reaction UTP + L-glutamine + ATP + H2O = CTP + L-glutamate + ADP + phosphate + 2 H(+). The enzyme catalyses L-glutamine + H2O = L-glutamate + NH4(+). The catalysed reaction is UTP + NH4(+) + ATP = CTP + ADP + phosphate + 2 H(+). It participates in pyrimidine metabolism; CTP biosynthesis via de novo pathway; CTP from UDP: step 2/2. Its activity is regulated as follows. Allosterically activated by GTP, when glutamine is the substrate; GTP has no effect on the reaction when ammonia is the substrate. The allosteric effector GTP functions by stabilizing the protein conformation that binds the tetrahedral intermediate(s) formed during glutamine hydrolysis. Inhibited by the product CTP, via allosteric rather than competitive inhibition. Functionally, catalyzes the ATP-dependent amination of UTP to CTP with either L-glutamine or ammonia as the source of nitrogen. Regulates intracellular CTP levels through interactions with the four ribonucleotide triphosphates. This chain is CTP synthase, found in Shewanella loihica (strain ATCC BAA-1088 / PV-4).